We begin with the raw amino-acid sequence, 650 residues long: Phosphatidylinositol 4-kinase gamma 7 (650 aa).

Positions 46 to 103 (RRVFVQTETGCVLGMELDRSDNVHTVKRRLQIALNFPTEESSLTYGDMVLTNDLSAVR) constitute a Ubiquitin-like; degenerate domain. Residues 166–463 (GVEPLPVHSG…SVTERDVFSP (298 aa)) enclose the PI3K/PI4K catalytic domain. Residues 172–178 (VHSGLGG) form a G-loop region. Residues 173 to 179 (HSGLGGA), Lys194, and 283 to 286 (QKFV) contribute to the ATP site. The interval 316-324 (FNTDRHGGN) is catalytic loop. Residues 343–369 (PIDHGLCLPETLEDPYFEWIHWPQASL) form an activation loop region. ATP is bound at residue Asp345. 2 disordered regions span residues 508-534 (SLGK…ENTV) and 560-595 (STSM…KSAN). The segment covering 516-529 (IKEEEEDEEEEEDK) has biased composition (acidic residues). 2 stretches are compositionally biased toward polar residues: residues 560–569 (STSMKNTHLS) and 585–595 (ENTSSGHKSAN). Phosphoserine is present on Ser593.

The protein belongs to the PI3/PI4-kinase family. Type II PI4K subfamily.

It catalyses the reaction a 1,2-diacyl-sn-glycero-3-phospho-(1D-myo-inositol) + ATP = a 1,2-diacyl-sn-glycero-3-phospho-(1D-myo-inositol 4-phosphate) + ADP + H(+). Its function is as follows. The phosphorylation of phosphatidylinositol (PI) to PI4P is the first committed step in the generation of phosphatidylinositol 4,5-bisphosphate (PIP2), a precursor of the second messenger inositol 1,4,5-trisphosphate (InsP3). Undergoes autophosphorylation and phosphorylates serine/threonine residues of protein substrates. In Arabidopsis thaliana (Mouse-ear cress), this protein is Phosphatidylinositol 4-kinase gamma 7.